Here is a 437-residue protein sequence, read N- to C-terminus: UDP-N-acetylmuramate--L-alanine ligase (437 aa).

Position 108–114 (108–114) interacts with ATP; that stretch reads GAHGKTS.

This sequence belongs to the MurCDEF family.

It is found in the cytoplasm. The enzyme catalyses UDP-N-acetyl-alpha-D-muramate + L-alanine + ATP = UDP-N-acetyl-alpha-D-muramoyl-L-alanine + ADP + phosphate + H(+). It functions in the pathway cell wall biogenesis; peptidoglycan biosynthesis. Its function is as follows. Cell wall formation. The protein is UDP-N-acetylmuramate--L-alanine ligase of Staphylococcus aureus (strain JH9).